Reading from the N-terminus, the 657-residue chain is Bifunctional lysine-specific demethylase and histidyl-hydroxylase NO66 (657 aa).

2 disordered regions span residues Met1 to Pro141 and Lys165 to Glu198. Polar residues predominate over residues Ser32–Asp41. A compositionally biased stretch (basic and acidic residues) spans Ala55 to Gly71. 2 stretches are compositionally biased toward polar residues: residues Ser73–Arg84 and Arg132–Pro141. Phosphoserine is present on Ser133. Residue Thr139 is modified to Phosphothreonine. Ser140 carries the phosphoserine modification. In terms of domain architecture, JmjC spans Asn315–Val454. Fe cation is bound by residues His355, Asp357, and His420.

Belongs to the ROX family. NO66 subfamily. It depends on Fe(2+) as a cofactor.

Its subcellular location is the nucleus. The catalysed reaction is N(6),N(6)-dimethyl-L-lysyl(36)-[histone H3] + 2 2-oxoglutarate + 2 O2 = L-lysyl(36)-[histone H3] + 2 formaldehyde + 2 succinate + 2 CO2. Its function is as follows. Oxygenase that can act as both a histone lysine demethylase and a ribosomal histidine hydroxylase. Specifically demethylates 'Lys-4' (H3K4me) and 'Lys-36' (H3K36me) of histone H3, thereby playing a central role in histone code. The polypeptide is Bifunctional lysine-specific demethylase and histidyl-hydroxylase NO66 (Drosophila erecta (Fruit fly)).